Consider the following 377-residue polypeptide: Chaperone protein DnaJ (377 aa).

In terms of domain architecture, J spans 5–70 (DYYEILGVSR…QKRAAYDQYG (66 aa)). Residues 132–210 (GVTKEIRIPT…CHGHGRIEKS (79 aa)) form a CR-type zinc finger. Residues Cys-145, Cys-148, Cys-162, Cys-165, Cys-184, Cys-187, Cys-198, and Cys-201 each contribute to the Zn(2+) site. CXXCXGXG motif repeat units follow at residues 145-152 (CDVCHGSG), 162-169 (CPTCHGAG), 184-191 (CPHCHGRG), and 198-205 (CNKCHGHG).

Belongs to the DnaJ family. In terms of assembly, homodimer. Zn(2+) is required as a cofactor.

The protein localises to the cytoplasm. In terms of biological role, participates actively in the response to hyperosmotic and heat shock by preventing the aggregation of stress-denatured proteins and by disaggregating proteins, also in an autonomous, DnaK-independent fashion. Unfolded proteins bind initially to DnaJ; upon interaction with the DnaJ-bound protein, DnaK hydrolyzes its bound ATP, resulting in the formation of a stable complex. GrpE releases ADP from DnaK; ATP binding to DnaK triggers the release of the substrate protein, thus completing the reaction cycle. Several rounds of ATP-dependent interactions between DnaJ, DnaK and GrpE are required for fully efficient folding. Also involved, together with DnaK and GrpE, in the DNA replication of plasmids through activation of initiation proteins. The chain is Chaperone protein DnaJ from Edwardsiella ictaluri (strain 93-146).